The following is a 200-amino-acid chain: ATP-dependent Clp protease proteolytic subunit (200 aa).

Serine 98 serves as the catalytic Nucleophile. The active site involves histidine 123.

This sequence belongs to the peptidase S14 family. Fourteen ClpP subunits assemble into 2 heptameric rings which stack back to back to give a disk-like structure with a central cavity, resembling the structure of eukaryotic proteasomes.

The protein resides in the cytoplasm. It carries out the reaction Hydrolysis of proteins to small peptides in the presence of ATP and magnesium. alpha-casein is the usual test substrate. In the absence of ATP, only oligopeptides shorter than five residues are hydrolyzed (such as succinyl-Leu-Tyr-|-NHMec, and Leu-Tyr-Leu-|-Tyr-Trp, in which cleavage of the -Tyr-|-Leu- and -Tyr-|-Trp bonds also occurs).. Functionally, cleaves peptides in various proteins in a process that requires ATP hydrolysis. Has a chymotrypsin-like activity. Plays a major role in the degradation of misfolded proteins. This chain is ATP-dependent Clp protease proteolytic subunit, found in Ehrlichia canis (strain Jake).